The sequence spans 305 residues: Protoheme IX farnesyltransferase (305 aa).

A run of 9 helical transmembrane segments spans residues 28–48 (IIELLLITTVPVMFLAEQGVP), 52–72 (LVLLTCLGGYLSAGGANALNM), 101–121 (LAFGITLAVVSTLLFGLTVNW), 122–142 (LSAWLSLGALLFYVVVYTMIL), 149–169 (NIVWGGIAGCLPVLIGWSSVT), 174–194 (WAPVILFLVMFFWTPPHYWPL), 218–238 (VVARQIVIYSWVMVGVSLLLT), 240–260 (LGYTGWFYTLVALLAGGFWLW), and 283–303 (LFHWSITYVSILFVAVAVDPF).

Belongs to the UbiA prenyltransferase family. Protoheme IX farnesyltransferase subfamily.

Its subcellular location is the cell membrane. It carries out the reaction heme b + (2E,6E)-farnesyl diphosphate + H2O = Fe(II)-heme o + diphosphate. Its pathway is porphyrin-containing compound metabolism; heme O biosynthesis; heme O from protoheme: step 1/1. Its function is as follows. Converts heme B (protoheme IX) to heme O by substitution of the vinyl group on carbon 2 of heme B porphyrin ring with a hydroxyethyl farnesyl side group. In Streptomyces avermitilis (strain ATCC 31267 / DSM 46492 / JCM 5070 / NBRC 14893 / NCIMB 12804 / NRRL 8165 / MA-4680), this protein is Protoheme IX farnesyltransferase.